A 535-amino-acid chain; its full sequence is MTKYIFVTGGVVSSLGKGIVAASLGRLLKNRGLNVTIQKFDPYINVDPGTMNPYQHGEVFVTDDGTETDLDLGHYERFIDNNLNKYSNVTTGKIYSEVLEKERHGDYLGATVQVIPHITGMIKEKIMRAGKTLGADFVITEIGGTVGDIESQPFLEAIRQMKAEVGDENVVYIHTTLVPYLHAAHEMKTKPTQHSVRELRSIGIQPNILVVRTEAPITDDMRKKIALFCDVDPSAVVESMDVPTIYSIPLRLQDQGLDQIVLDHFGVQAPKADMTAWAQMVDHMQHLSRTIKIALVGKYVALHDAYISVAEALQHAGYPVDANIDLQMIDAEKITDDNVQDVLGSADGIIVPGGFGDRGIEGMITAIKYAREQDVPFLGICLGMQVASIEFARDVLGYADANSTEMNPDTSHKIIDLMADQADVHEMGGTQRLGLYPCKLKAGSRAAAAYDNQEMIQERHRHRYEFNNQYRDEMTAKGLVFSGTSPDDHLVEVIELPEKKFFVAAQYHPEFLSRPNRPEGLFRDFVAAASREVKD.

The amidoligase domain stretch occupies residues 1–267; it reads MTKYIFVTGG…DQIVLDHFGV (267 aa). Ser13 serves as a coordination point for CTP. Ser13 provides a ligand contact to UTP. 14-19 contributes to the ATP binding site; that stretch reads SLGKGI. Tyr54 provides a ligand contact to L-glutamine. Residue Asp71 coordinates ATP. Mg(2+) is bound by residues Asp71 and Glu141. Residues 148–150, 188–193, and Lys224 each bind CTP; these read DIE and KTKPTQ. UTP is bound by residues 188-193 and Lys224; that span reads KTKPTQ. The 244-residue stretch at 292 to 535 folds into the Glutamine amidotransferase type-1 domain; sequence KIALVGKYVA…VAAASREVKD (244 aa). Residue Gly354 coordinates L-glutamine. Cys381 serves as the catalytic Nucleophile; for glutamine hydrolysis. L-glutamine is bound by residues 382–385, Glu405, and Arg463; that span reads LGMQ. Active-site residues include His508 and Glu510.

It belongs to the CTP synthase family. In terms of assembly, homotetramer.

It carries out the reaction UTP + L-glutamine + ATP + H2O = CTP + L-glutamate + ADP + phosphate + 2 H(+). The catalysed reaction is L-glutamine + H2O = L-glutamate + NH4(+). The enzyme catalyses UTP + NH4(+) + ATP = CTP + ADP + phosphate + 2 H(+). The protein operates within pyrimidine metabolism; CTP biosynthesis via de novo pathway; CTP from UDP: step 2/2. With respect to regulation, allosterically activated by GTP, when glutamine is the substrate; GTP has no effect on the reaction when ammonia is the substrate. The allosteric effector GTP functions by stabilizing the protein conformation that binds the tetrahedral intermediate(s) formed during glutamine hydrolysis. Inhibited by the product CTP, via allosteric rather than competitive inhibition. In terms of biological role, catalyzes the ATP-dependent amination of UTP to CTP with either L-glutamine or ammonia as the source of nitrogen. Regulates intracellular CTP levels through interactions with the four ribonucleotide triphosphates. The polypeptide is CTP synthase (Levilactobacillus brevis (strain ATCC 367 / BCRC 12310 / CIP 105137 / JCM 1170 / LMG 11437 / NCIMB 947 / NCTC 947) (Lactobacillus brevis)).